Here is a 223-residue protein sequence, read N- to C-terminus: Pyridoxine/pyridoxamine 5'-phosphate oxidase (223 aa).

Residues 13–16 and Lys73 contribute to the substrate site; that span reads RKNY. Residues 68–73, 83–84, Lys90, and Gln112 each bind FMN; these read RIVLLK and YT. Residues Tyr130, Arg134, and Ser138 each contribute to the substrate site. Residues 147-148 and Trp193 each bind FMN; that span reads QS. Position 199–201 (199–201) interacts with substrate; it reads RLH. Arg203 serves as a coordination point for FMN.

It belongs to the pyridoxamine 5'-phosphate oxidase family. Homodimer. Requires FMN as cofactor.

The enzyme catalyses pyridoxamine 5'-phosphate + O2 + H2O = pyridoxal 5'-phosphate + H2O2 + NH4(+). It carries out the reaction pyridoxine 5'-phosphate + O2 = pyridoxal 5'-phosphate + H2O2. It participates in cofactor metabolism; pyridoxal 5'-phosphate salvage; pyridoxal 5'-phosphate from pyridoxamine 5'-phosphate: step 1/1. The protein operates within cofactor metabolism; pyridoxal 5'-phosphate salvage; pyridoxal 5'-phosphate from pyridoxine 5'-phosphate: step 1/1. Functionally, catalyzes the oxidation of either pyridoxine 5'-phosphate (PNP) or pyridoxamine 5'-phosphate (PMP) into pyridoxal 5'-phosphate (PLP). The sequence is that of Pyridoxine/pyridoxamine 5'-phosphate oxidase from Rhodopirellula baltica (strain DSM 10527 / NCIMB 13988 / SH1).